The primary structure comprises 282 residues: Putative hydrolase Bcep18194_B0137 (282 aa).

Residues Glu-124, Glu-126, and Asp-155 each coordinate Mg(2+).

It belongs to the FAH family. Mg(2+) is required as a cofactor.

The protein is Putative hydrolase Bcep18194_B0137 of Burkholderia lata (strain ATCC 17760 / DSM 23089 / LMG 22485 / NCIMB 9086 / R18194 / 383).